The sequence spans 221 residues: Ribonuclease T (221 aa).

The 177-residue stretch at 20–196 (VVVDLETGGF…YDTERTAELF (177 aa)) folds into the Exonuclease domain. Residues D23, E25, H183, and D188 each coordinate Mg(2+). The active-site Proton donor/acceptor is H183.

This sequence belongs to the RNase T family. In terms of assembly, homodimer. Requires Mg(2+) as cofactor.

Its function is as follows. Trims short 3' overhangs of a variety of RNA species, leaving a one or two nucleotide 3' overhang. Responsible for the end-turnover of tRNA: specifically removes the terminal AMP residue from uncharged tRNA (tRNA-C-C-A). Also appears to be involved in tRNA biosynthesis. The sequence is that of Ribonuclease T from Chromohalobacter salexigens (strain ATCC BAA-138 / DSM 3043 / CIP 106854 / NCIMB 13768 / 1H11).